The primary structure comprises 163 residues: MLSGYRVFSRRYVKSFPCLSRGFEIETELTIHALELRMKYGEVNTKYGERSEGSVSKLSTWSDGFKILKTIIKLYSLERPLYFFSIIGVLLAALSIILGLPIIVDYIDTGLVRRFPTAFLTASIMLSSIMAFVCGIILHSNTTTRREMKALFYLSEKNYKLIM.

This is an uncharacterized protein from Shigella flexneri.